Reading from the N-terminus, the 159-residue chain is 2-C-methyl-D-erythritol 2,4-cyclodiphosphate synthase (159 aa).

Residues D8 and H10 each coordinate a divalent metal cation. 4-CDP-2-C-methyl-D-erythritol 2-phosphate contacts are provided by residues 8–10 (DVH) and 34–35 (HS). H42 provides a ligand contact to a divalent metal cation. 4-CDP-2-C-methyl-D-erythritol 2-phosphate contacts are provided by residues 56 to 58 (DIG), 61 to 65 (FPDTD), 100 to 106 (AQAPKML), 132 to 135 (TTTE), F139, and R142.

The protein belongs to the IspF family. In terms of assembly, homotrimer. The cofactor is a divalent metal cation.

The catalysed reaction is 4-CDP-2-C-methyl-D-erythritol 2-phosphate = 2-C-methyl-D-erythritol 2,4-cyclic diphosphate + CMP. It participates in isoprenoid biosynthesis; isopentenyl diphosphate biosynthesis via DXP pathway; isopentenyl diphosphate from 1-deoxy-D-xylulose 5-phosphate: step 4/6. In terms of biological role, involved in the biosynthesis of isopentenyl diphosphate (IPP) and dimethylallyl diphosphate (DMAPP), two major building blocks of isoprenoid compounds. Catalyzes the conversion of 4-diphosphocytidyl-2-C-methyl-D-erythritol 2-phosphate (CDP-ME2P) to 2-C-methyl-D-erythritol 2,4-cyclodiphosphate (ME-CPP) with a corresponding release of cytidine 5-monophosphate (CMP). This is 2-C-methyl-D-erythritol 2,4-cyclodiphosphate synthase from Klebsiella pneumoniae subsp. pneumoniae (strain ATCC 700721 / MGH 78578).